We begin with the raw amino-acid sequence, 147 residues long: 3-dehydroquinate dehydratase (147 aa).

Residue Tyr-23 is the Proton acceptor of the active site. Substrate contacts are provided by Asn-74, His-80, and Asp-87. His-100 acts as the Proton donor in catalysis. Substrate-binding positions include 101-102 and Arg-111; that span reads LS.

It belongs to the type-II 3-dehydroquinase family. As to quaternary structure, homododecamer.

It catalyses the reaction 3-dehydroquinate = 3-dehydroshikimate + H2O. Its pathway is metabolic intermediate biosynthesis; chorismate biosynthesis; chorismate from D-erythrose 4-phosphate and phosphoenolpyruvate: step 3/7. Its function is as follows. Catalyzes a trans-dehydration via an enolate intermediate. This Clostridium botulinum (strain Loch Maree / Type A3) protein is 3-dehydroquinate dehydratase.